Consider the following 80-residue polypeptide: ATP synthase subunit c (80 aa).

2 helical membrane-spanning segments follow: residues 8–28 (MIYF…AIGI) and 55–75 (IVMG…LYLI).

It belongs to the ATPase C chain family. As to quaternary structure, F-type ATPases have 2 components, F(1) - the catalytic core - and F(0) - the membrane proton channel. F(1) has five subunits: alpha(3), beta(3), gamma(1), delta(1), epsilon(1). F(0) has three main subunits: a(1), b(2) and c(10-14). The alpha and beta chains form an alternating ring which encloses part of the gamma chain. F(1) is attached to F(0) by a central stalk formed by the gamma and epsilon chains, while a peripheral stalk is formed by the delta and b chains.

The protein resides in the cell inner membrane. Its function is as follows. F(1)F(0) ATP synthase produces ATP from ADP in the presence of a proton or sodium gradient. F-type ATPases consist of two structural domains, F(1) containing the extramembraneous catalytic core and F(0) containing the membrane proton channel, linked together by a central stalk and a peripheral stalk. During catalysis, ATP synthesis in the catalytic domain of F(1) is coupled via a rotary mechanism of the central stalk subunits to proton translocation. Key component of the F(0) channel; it plays a direct role in translocation across the membrane. A homomeric c-ring of between 10-14 subunits forms the central stalk rotor element with the F(1) delta and epsilon subunits. The polypeptide is ATP synthase subunit c (Aeromonas salmonicida (strain A449)).